A 562-amino-acid chain; its full sequence is NAD-dependent malic enzyme 1 (562 aa).

Catalysis depends on Tyr101, which acts as the Proton donor. Position 154 (Arg154) interacts with NAD(+). Lys172 acts as the Proton acceptor in catalysis. Residues Glu243, Asp244, and Asp267 each contribute to the a divalent metal cation site. NAD(+)-binding residues include Asp267 and Asn415.

This sequence belongs to the malic enzymes family. As to quaternary structure, homotetramer. It depends on Mg(2+) as a cofactor. Requires Mn(2+) as cofactor.

It catalyses the reaction (S)-malate + NAD(+) = pyruvate + CO2 + NADH. It carries out the reaction oxaloacetate + H(+) = pyruvate + CO2. The sequence is that of NAD-dependent malic enzyme 1 from Vibrio vulnificus (strain YJ016).